We begin with the raw amino-acid sequence, 549 residues long: MVGMSMQPYGIQSMLKEGYRHLSGLDEAVIKNIEACKELSTITRTSLGPNGMNKMVINHLDKLFVTNDAATIVNELEIQHPAAKLLVLAAKAQQEEIGDGANLTISFAGELLQNAEELIRMGLHPSEIISGYTKAVSKAVEILEQLVETGSETMDVRNKDEVISRMRAAVASKQFGQEEIICSLVTDACIQVCPKNPTNFNVDNVRVSKLLGGGLHNSCIVRGMVLKSDAVGSIKRMEKAKVAVFAGGVDTTATETKGTVLIHSAEQLENYAKTEEAKVEELIKAVAESGAKVIVSGGSIGEMALHFCERYKIMVLKISSKFELRRFCRTAGAVAHLKLSRPSPEDLGYVDSISVEEIGGVTVTIARNEEGGNSISTVVLRGSTDSILDDLERAVDDGVNTYKAMCRDSRIVPGAAATEIELAQRLKEYANAEIGLDKYAITKYAESFEFVPKTLADNAGLNAMEIIAALYTGHGSGNTKLGIDLEEGACKDVSETKVWDLFATKLFALKYASDAACTVLRVDQIIMAKPAGGPRRDAAQAAGAGAEED.

Belongs to the TCP-1 chaperonin family. In terms of assembly, heterooligomeric complex of about 850 to 900 kDa that forms two stacked rings, 12 to 16 nm in diameter. Interacts with CCT3, KNAT1, STM and TTG1. In terms of tissue distribution, expressed in shoot meristems, root tip, vasculature and leaf epidermis.

It is found in the cytoplasm. In terms of biological role, molecular chaperone; assists the folding of proteins upon ATP hydrolysis. Known to play a role, in vitro, in the folding of actin and tubulin. Contributes to stem cell maintenance through its impact on transcription factors trafficking through plasmodesmata. Probably involved in refolding translocated, partially unfolded proteins, including viral movement proteins. This is T-complex protein 1 subunit theta from Arabidopsis thaliana (Mouse-ear cress).